Reading from the N-terminus, the 192-residue chain is Ion-translocating oxidoreductase complex subunit B (192 aa).

A hydrophobic region spans residues 1–26 (MNTIWIAVAAISLLGLAFGAILGYAS). Residues 32–91 (EDDPVVEKIDEILPQSQCGQCGYPGCRPYAEAISCNGEKINRCAPGGEAVMLKISELLNV) enclose the 4Fe-4S domain. Residues Cys49, Cys52, Cys57, Cys74, Cys117, Cys120, Cys123, Cys127, Cys147, Cys150, Cys153, and Cys157 each coordinate [4Fe-4S] cluster. 4Fe-4S ferredoxin-type domains follow at residues 108–137 (VVAV…GATR) and 138–167 (AMHT…LQPV).

This sequence belongs to the 4Fe4S bacterial-type ferredoxin family. RnfB subfamily. The complex is composed of six subunits: RsxA, RsxB, RsxC, RsxD, RsxE and RsxG. [4Fe-4S] cluster is required as a cofactor.

The protein localises to the cell inner membrane. Its function is as follows. Part of a membrane-bound complex that couples electron transfer with translocation of ions across the membrane. Required to maintain the reduced state of SoxR. The protein is Ion-translocating oxidoreductase complex subunit B of Escherichia fergusonii (strain ATCC 35469 / DSM 13698 / CCUG 18766 / IAM 14443 / JCM 21226 / LMG 7866 / NBRC 102419 / NCTC 12128 / CDC 0568-73).